The following is a 149-amino-acid chain: Transcriptional repressor NrdR (149 aa).

The segment at 3–34 (CPFCFAVDTKVIDSRLVGEGSSVRRRRQCLVC) is a zinc-finger region. In terms of domain architecture, ATP-cone spans 49-139 (PRVVKSNDVR…VYRSFEDIKE (91 aa)).

Belongs to the NrdR family. The cofactor is Zn(2+).

Its function is as follows. Negatively regulates transcription of bacterial ribonucleotide reductase nrd genes and operons by binding to NrdR-boxes. This Klebsiella pneumoniae (strain 342) protein is Transcriptional repressor NrdR.